Consider the following 218-residue polypeptide: ATP-dependent dethiobiotin synthetase BioD (218 aa).

ATP is bound at residue 10–15; it reads NAGKTT. Mg(2+) is bound at residue T14. K35 is an active-site residue. Substrate is bound at residue T39. A Mg(2+)-binding site is contributed by E116. ATP contacts are provided by residues 116-119 and 176-177; these read EGAG and LR.

This sequence belongs to the dethiobiotin synthetase family. Homodimer. Mg(2+) serves as cofactor.

The protein resides in the cytoplasm. It catalyses the reaction (7R,8S)-7,8-diammoniononanoate + CO2 + ATP = (4R,5S)-dethiobiotin + ADP + phosphate + 3 H(+). Its pathway is cofactor biosynthesis; biotin biosynthesis; biotin from 7,8-diaminononanoate: step 1/2. Catalyzes a mechanistically unusual reaction, the ATP-dependent insertion of CO2 between the N7 and N8 nitrogen atoms of 7,8-diaminopelargonic acid (DAPA, also called 7,8-diammoniononanoate) to form a ureido ring. The sequence is that of ATP-dependent dethiobiotin synthetase BioD from Helicobacter pylori (strain J99 / ATCC 700824) (Campylobacter pylori J99).